A 357-amino-acid polypeptide reads, in one-letter code: tRNA N6-adenosine threonylcarbamoyltransferase (357 aa).

Residues His-116 and His-120 each contribute to the Fe cation site. Residues 139-143 (LVSGG), Asp-172, Gly-185, and Asn-284 contribute to the substrate site. Residue Asp-312 coordinates Fe cation.

The protein belongs to the KAE1 / TsaD family. Fe(2+) is required as a cofactor.

It localises to the cytoplasm. It carries out the reaction L-threonylcarbamoyladenylate + adenosine(37) in tRNA = N(6)-L-threonylcarbamoyladenosine(37) in tRNA + AMP + H(+). Required for the formation of a threonylcarbamoyl group on adenosine at position 37 (t(6)A37) in tRNAs that read codons beginning with adenine. Is involved in the transfer of the threonylcarbamoyl moiety of threonylcarbamoyl-AMP (TC-AMP) to the N6 group of A37, together with TsaE and TsaB. TsaD likely plays a direct catalytic role in this reaction. The protein is tRNA N6-adenosine threonylcarbamoyltransferase of Synechococcus sp. (strain CC9902).